A 611-amino-acid chain; its full sequence is Threonine--tRNA ligase (611 aa).

The segment at 1–25 is disordered; sequence MAGPDRKPVSSAAATTPAPSAPVVL. Residues 9-24 are compositionally biased toward low complexity; the sequence is VSSAAATTPAPSAPVV. Residues 209–502 are catalytic; sequence DHRRIGKDLD…MTENYAGDYP (294 aa). Positions 302, 353, and 479 each coordinate Zn(2+).

Belongs to the class-II aminoacyl-tRNA synthetase family. Homodimer. Zn(2+) serves as cofactor.

The protein localises to the cytoplasm. It catalyses the reaction tRNA(Thr) + L-threonine + ATP = L-threonyl-tRNA(Thr) + AMP + diphosphate + H(+). Functionally, catalyzes the attachment of threonine to tRNA(Thr) in a two-step reaction: L-threonine is first activated by ATP to form Thr-AMP and then transferred to the acceptor end of tRNA(Thr). Also edits incorrectly charged L-seryl-tRNA(Thr). In Parasynechococcus marenigrum (strain WH8102), this protein is Threonine--tRNA ligase.